The chain runs to 235 residues: Uridylate kinase (235 aa).

ATP is bound at residue 9–12; sequence KLSG. An involved in allosteric activation by GTP region spans residues 17 to 22; sequence GDQGYG. Gly-51 serves as a coordination point for UMP. Residues Gly-52 and Arg-56 each coordinate ATP. Residues Asp-71 and 132-139 each bind UMP; that span reads CGNPFFTT. ATP is bound by residues Thr-159, Tyr-165, and Asp-168.

Belongs to the UMP kinase family. In terms of assembly, homohexamer.

Its subcellular location is the cytoplasm. The enzyme catalyses UMP + ATP = UDP + ADP. It participates in pyrimidine metabolism; CTP biosynthesis via de novo pathway; UDP from UMP (UMPK route): step 1/1. Allosterically activated by GTP. Inhibited by UTP. In terms of biological role, catalyzes the reversible phosphorylation of UMP to UDP. The polypeptide is Uridylate kinase (Synechococcus sp. (strain WH7803)).